The primary structure comprises 1068 residues: Phosphatidylinositol 4,5-bisphosphate 3-kinase catalytic subunit alpha isoform (1068 aa).

The 90-residue stretch at 16–105 folds into the PI3K-ABD domain; sequence MPPRILVECL…QPFLKVIEPV (90 aa). In terms of domain architecture, PI3K-RBD spans 187–289; it reads KGQIIVVIWV…GRMPNLMLMA (103 aa). The 158-residue stretch at 330–487 folds into the C2 PI3K-type domain; that stretch reads INSALRIKIL…DWFSSVVKFP (158 aa). A PIK helical domain is found at 517–694; it reads LARDNELREN…GLLLESYCRA (178 aa). The region spanning 765-1051 is the PI3K/PI4K catalytic domain; the sequence is RLEECRIMSS…QMNDAHHGGW (287 aa). Residues 771-777 are G-loop; that stretch reads IMSSAKR. The tract at residues 912–920 is catalytic loop; the sequence is GIGDRHNSN. The interval 931–957 is activation loop; sequence HIDFGHFLDHKKKKFGYKRERVPFVLT.

It belongs to the PI3/PI4-kinase family. In terms of assembly, heterodimer of a catalytic subunit PIK3CA and a p85 regulatory subunit (PIK3R1, PIK3R2 or PIK3R3). Interacts with IRS1 in nuclear extracts. Interacts with RUFY3. Interacts with RASD2. Interacts with APPL1. Interacts with HRAS and KRAS. Interaction with HRAS/KRAS is required for PI3K pathway signaling and cell proliferation stimulated by EGF and FGF2. Interacts with FAM83B; activates the PI3K/AKT signaling cascade.

It carries out the reaction a 1,2-diacyl-sn-glycero-3-phospho-(1D-myo-inositol-4,5-bisphosphate) + ATP = a 1,2-diacyl-sn-glycero-3-phospho-(1D-myo-inositol-3,4,5-trisphosphate) + ADP + H(+). The catalysed reaction is a 1,2-diacyl-sn-glycero-3-phospho-(1D-myo-inositol) + ATP = a 1,2-diacyl-sn-glycero-3-phospho-(1D-myo-inositol-3-phosphate) + ADP + H(+). The enzyme catalyses L-seryl-[protein] + ATP = O-phospho-L-seryl-[protein] + ADP + H(+). It catalyses the reaction 1,2-dioctanoyl-sn-glycero-3-phospho-(1D-myo-inositol-4,5-bisphosphate) + ATP = 1,2-dioctanoyl-sn-glycero-3-phospho-(1D-myo-inositol-3,4,5-trisphosphate) + ADP + H(+). It carries out the reaction 1-octadecanoyl-2-(5Z,8Z,11Z,14Z)-eicosatetraenoyl-sn-glycero-3-phospho-1D-myo-inositol 4,5-bisphosphate + ATP = 1-octadecanoyl-2-(5Z,8Z,11Z,14Z-eicosatetraenoyl)-sn-glycero-3-phospho-(1D-myo-inositol 3,4,5-triphosphate) + ADP + H(+). Its pathway is phospholipid metabolism; phosphatidylinositol phosphate biosynthesis. Phosphoinositide-3-kinase (PI3K) phosphorylates phosphatidylinositol (PI) and its phosphorylated derivatives at position 3 of the inositol ring to produce 3-phosphoinositides. Uses ATP and PtdIns(4,5)P2 (phosphatidylinositol 4,5-bisphosphate) to generate phosphatidylinositol 3,4,5-trisphosphate (PIP3). PIP3 plays a key role by recruiting PH domain-containing proteins to the membrane, including AKT1 and PDPK1, activating signaling cascades involved in cell growth, survival, proliferation, motility and morphology. Participates in cellular signaling in response to various growth factors. Involved in the activation of AKT1 upon stimulation by receptor tyrosine kinases ligands such as EGF, insulin, IGF1, VEGFA and PDGF. Involved in signaling via insulin-receptor substrate (IRS) proteins. Essential in endothelial cell migration during vascular development through VEGFA signaling, possibly by regulating RhoA activity. Required for lymphatic vasculature development, possibly by binding to RAS and by activation by EGF and FGF2, but not by PDGF. Regulates invadopodia formation through the PDPK1-AKT1 pathway. Participates in cardiomyogenesis in embryonic stem cells through a AKT1 pathway. Participates in vasculogenesis in embryonic stem cells through PDK1 and protein kinase C pathway. Also has serine-protein kinase activity: phosphorylates PIK3R1 (p85alpha regulatory subunit), EIF4EBP1 and HRAS. Plays a role in the positive regulation of phagocytosis and pinocytosis. The polypeptide is Phosphatidylinositol 4,5-bisphosphate 3-kinase catalytic subunit alpha isoform (Pik3ca) (Mus musculus (Mouse)).